A 609-amino-acid chain; its full sequence is PTS system beta-glucoside-specific EIIBCA component (609 aa).

The region spanning 1 to 86 is the PTS EIIB type-1 domain; it reads MDYDKLSKDI…VRHSNLSDEK (86 aa). The active-site Phosphocysteine intermediate; for EIIB activity is Cys26. The region spanning 103 to 459 is the PTS EIIC type-1 domain; sequence DVISGVFTPI…GSQQPAVHEG (357 aa). A run of 10 helical transmembrane segments spans residues 112-132, 141-161, 174-194, 202-222, 246-266, 281-301, 321-341, 351-371, 379-399, and 412-432; these read ILPAIAGAGMIKGLVALAVTF, VHVILTAVGDGAFYFLPLLLA, VAAAIAAAILHPDLTALLGAG, LPVTAATYSSTVIPILLSIWI, FTLLIVVPLTLITVGPLGAIL, AGLVAMILLAGTFSLIIMTGM, LLPAMFLANMGQAGASFAVFL, LALTTSITALMGITEPAMYGV, FAAALIGGAAGGAFYGMTGVA, and IPVFIGPTFIYAMIGLVIAFA. Positions 480–584 constitute a PTS EIIA type-1 domain; that stretch reads DGVFSAGVMG…DVITPVIVTN (105 aa). Catalysis depends on His532, which acts as the Tele-phosphohistidine intermediate; for EIIA activity.

It is found in the cell membrane. The phosphoenolpyruvate-dependent sugar phosphotransferase system (sugar PTS), a major carbohydrate active -transport system, catalyzes the phosphorylation of incoming sugar substrates concomitantly with their translocation across the cell membrane. This system is involved in beta-glucoside transport. The polypeptide is PTS system beta-glucoside-specific EIIBCA component (bglP) (Bacillus subtilis (strain 168)).